The sequence spans 195 residues: MSSKYAVKLKTDFDNPRWIKRHKHMFDFLDINGNGKITLDEIVSKASDDICAKLEATPEQTKRHQVCVEAFFRGCGMEYGKEIAFPQFLDGWKQLATSELKKWARNEPTLIREWGDAVFDIFDKDGSGTITLDEWKAYGKISGISPSQEDCEATFRHCDLDNSGDLDVDEMTRQHLGFWYTLDPEADGLYGNGVP.

Positions 1–6 (MSSKYA) are excised as a propeptide. 4 consecutive EF-hand domains span residues 17-52 (RWIK…DICA), 53-88 (KLEA…FPQF), 110-145 (LIRE…SGIS), and 146-181 (PSQE…FWYT). Residues Asp-30, Asn-32, Asn-34, Lys-36, and Glu-41 each coordinate Ca(2+). Positions 123, 125, 127, 129, 134, 159, 161, 163, 165, and 170 each coordinate Ca(2+).

Belongs to the aequorin family.

Its function is as follows. Ca(2+)-dependent bioluminescence photoprotein. Displays an emission peak at 470 nm (blue light). Trace amounts of calcium ion trigger the intramolecular oxidation of the chromophore, coelenterazine into coelenteramide and CO(2) with the concomitant emission of light. The sequence is that of Obelin from Obelia longissima (Black sea hydrozoan).